The chain runs to 439 residues: Putative FBD-associated F-box protein At1g05080 (439 aa).

One can recognise an F-box domain in the interval 12-58 (EDRISVLPEDLLVVILDLLPTKDVVATMILSKRWLSIWTMVRTLEYT). Residues 360-410 (SWKQPSHVPECLSSQLEIFEWRDYGDRIIEEEFLTYVLANSKRLKTATISL) enclose the FBD domain.

In Arabidopsis thaliana (Mouse-ear cress), this protein is Putative FBD-associated F-box protein At1g05080.